The following is a 138-amino-acid chain: Cellular retinoic acid-binding protein 2 (138 aa).

Positions 21-31 match the Nuclear localization signal motif; sequence KALGVNMMMRK. Lys-102 is covalently cross-linked (Glycyl lysine isopeptide (Lys-Gly) (interchain with G-Cter in SUMO)). 133-135 lines the all-trans-retinoate pocket; sequence RVY.

Belongs to the calycin superfamily. Fatty-acid binding protein (FABP) family. As to quaternary structure, interacts with importin alpha. Interacts with RXR and RARA. In terms of processing, sumoylated in response to retinoic acid binding, sumoylation is critical for dissociation from ER and subsequent nuclear translocation. Embryo and skin of adult mouse.

The protein resides in the cytoplasm. It localises to the endoplasmic reticulum. It is found in the nucleus. Its function is as follows. Transports retinoic acid to the nucleus. Regulates the access of retinoic acid to the nuclear retinoic acid receptors. In Mus musculus (Mouse), this protein is Cellular retinoic acid-binding protein 2 (Crabp2).